A 363-amino-acid polypeptide reads, in one-letter code: Sulfate/thiosulfate import ATP-binding protein CysA (363 aa).

Residues 3-237 (IEINNISKYF…PATRFVLEFL (235 aa)) form the ABC transporter domain. Position 35 to 42 (35 to 42 (GPSGSGKT)) interacts with ATP.

Belongs to the ABC transporter superfamily. Sulfate/tungstate importer (TC 3.A.1.6) family. In terms of assembly, the complex is composed of two ATP-binding proteins (CysA), two transmembrane proteins (CysT and CysW) and a solute-binding protein (CysP).

The protein resides in the cell inner membrane. It catalyses the reaction sulfate(out) + ATP + H2O = sulfate(in) + ADP + phosphate + H(+). The catalysed reaction is thiosulfate(out) + ATP + H2O = thiosulfate(in) + ADP + phosphate + H(+). In terms of biological role, part of the ABC transporter complex CysAWTP involved in sulfate/thiosulfate import. Responsible for energy coupling to the transport system. This Yersinia pestis protein is Sulfate/thiosulfate import ATP-binding protein CysA.